Reading from the N-terminus, the 207-residue chain is LexA repressor (207 aa).

The segment at residues 28 to 48 (VREIGEAVGLASSSTVHGHLS) is a DNA-binding region (H-T-H motif). Residues Ser130 and Lys168 each act as for autocatalytic cleavage activity in the active site.

Belongs to the peptidase S24 family. Homodimer.

It catalyses the reaction Hydrolysis of Ala-|-Gly bond in repressor LexA.. Its function is as follows. Represses a number of genes involved in the response to DNA damage (SOS response), including recA and lexA. In the presence of single-stranded DNA, RecA interacts with LexA causing an autocatalytic cleavage which disrupts the DNA-binding part of LexA, leading to derepression of the SOS regulon and eventually DNA repair. The polypeptide is LexA repressor (Staphylococcus aureus (strain Mu3 / ATCC 700698)).